The primary structure comprises 365 residues: Galactoside alpha-(1,2)-fucosyltransferase 1 (365 aa).

At 1–8 (MWLRSHRQ) the chain is on the cytoplasmic side. The helical; Signal-anchor for type II membrane protein transmembrane segment at 9 to 25 (LCLAFLLVCVLSVIFFL) threads the bilayer. At 26 to 365 (HIHQDSFPHG…LSPLWTLAKP (340 aa)) the chain is on the lumenal side. Asn65 and Asn327 each carry an N-linked (GlcNAc...) asparagine glycan.

This sequence belongs to the glycosyltransferase 11 family.

The protein resides in the golgi apparatus. It is found in the golgi stack membrane. It carries out the reaction a beta-D-galactosyl-(1-&gt;4)-N-acetyl-beta-D-glucosaminyl derivative + GDP-beta-L-fucose = an alpha-L-Fuc-(1-&gt;2)-beta-D-Gal-(1-&gt;4)-beta-D-GlcNAc derivative + GDP + H(+). The enzyme catalyses a ganglioside GA1 + GDP-beta-L-fucose = a ganglioside Fuc-GA1 + GDP + H(+). It catalyses the reaction a beta-D-Gal-(1-&gt;3)-beta-D-GlcNAc-(1-&gt;3)-beta-D-Gal-(1-&gt;4)-beta-D-Glc-(1&lt;-&gt;1')-Cer(d18:1(4E)) + GDP-beta-L-fucose = alpha-L-fucosyl-(1-&gt;2)- beta-D-galactosyl-(1-&gt;3)-N-acetyl-beta-D-glucosaminyl-(1-&gt;3)-beta-D-galactosyl-(1-&gt;4)-beta-D-glucosyl-(1&lt;-&gt;1')-N-acylsphing-4-enine + GDP + H(+). The catalysed reaction is a neolactoside nLc4Cer(d18:1(4E)) + GDP-beta-L-fucose = a neolactoside IV(2)-alpha-Fuc-nLc4Cer(d18:1(4E)) + GDP + H(+). It carries out the reaction a ganglioside GM1 + GDP-beta-L-fucose = a ganglioside Fuc-GM1 + GDP + H(+). The enzyme catalyses beta-D-galactosyl-(1-&gt;3)-N-acetyl-D-galactosamine + GDP-beta-L-fucose = alpha-L-fucosyl-(1-&gt;2)-beta-D-galactosyl-(1-&gt;3)-N-acetyl-D-galactosamine + GDP + H(+). Its pathway is protein modification; protein glycosylation. Its function is as follows. Catalyzes the transfer of L-fucose, from a guanosine diphosphate-beta-L-fucose, to the terminal galactose residue of glycoconjugates through an alpha(1,2) linkage leading to H antigen synthesis that is an intermediate substrate in the synthesis of ABO blood group antigens. H antigen is essential for maturation of the glomerular layer of the main olfactory bulb, in cell migration and early cell-cell contacts during tumor associated angiogenesis. Preferentially fucosylates soluble lactose and to a lesser extent fucosylates glycolipids gangliosides GA1 and GM1a. The sequence is that of Galactoside alpha-(1,2)-fucosyltransferase 1 from Homo sapiens (Human).